A 914-amino-acid chain; its full sequence is Caprin-2 (914 aa).

Disordered regions lie at residues 259-283 (PLPK…PSGL), 298-326 (EFLN…KEDF), 367-411 (KTVD…LPKD), 439-480 (DGES…SSQR), 495-529 (CLSN…PPLY), 608-631 (HRSF…PELN), and 718-747 (GAGT…AYPL). Residues 264–273 (DSQEKTETIK) are compositionally biased toward basic and acidic residues. The segment covering 274-283 (PDSQSRPSGL) has biased composition (polar residues). Over residues 370–392 (DIVKRSTTDPKEKRQRKKAEQDS) the composition is skewed to basic and acidic residues. A compositionally biased stretch (polar residues) spans 469-480 (KSPSDILPSSQR). Basic and acidic residues predominate over residues 508-520 (LELHSEDKPRKQA). Over residues 610 to 626 (SFTSAKTSSVTTASTQT) the composition is skewed to low complexity. The segment covering 718–738 (GAGTATQRSSAGWSDSSQVSS) has biased composition (polar residues). One can recognise a C1q domain in the interval 780-914 (LTQLRVAFSA…TFSGFLLYQD (135 aa)). Ca(2+) contacts are provided by aspartate 865 and glutamate 871.

Belongs to the caprin family. Homotrimer; via C1q domain.

It is found in the cytoplasm. The protein localises to the cell membrane. Its function is as follows. Promotes phosphorylation of the Wnt coreceptor LRP6, leading to increased activity of the canonical Wnt signaling pathway. Facilitates constitutive LRP6 phosphorylation by CDK14/CCNY during G2/M stage of the cell cycle, which may potentiate cells for Wnt signaling. May regulate the transport and translation of mRNAs, modulating for instance the expression of proteins involved in synaptic plasticity in neurons. Involved in regulation of growth as erythroblasts shift from a highly proliferative state towards their terminal phase of differentiation. May be involved in apoptosis. This is Caprin-2 from Danio rerio (Zebrafish).